The primary structure comprises 150 residues: D-aminoacyl-tRNA deacylase (150 aa).

The short motif at 137 to 138 (GP) is the Gly-cisPro motif, important for rejection of L-amino acids element.

It belongs to the DTD family. Homodimer.

The protein localises to the cytoplasm. It catalyses the reaction glycyl-tRNA(Ala) + H2O = tRNA(Ala) + glycine + H(+). The enzyme catalyses a D-aminoacyl-tRNA + H2O = a tRNA + a D-alpha-amino acid + H(+). An aminoacyl-tRNA editing enzyme that deacylates mischarged D-aminoacyl-tRNAs. Also deacylates mischarged glycyl-tRNA(Ala), protecting cells against glycine mischarging by AlaRS. Acts via tRNA-based rather than protein-based catalysis; rejects L-amino acids rather than detecting D-amino acids in the active site. By recycling D-aminoacyl-tRNA to D-amino acids and free tRNA molecules, this enzyme counteracts the toxicity associated with the formation of D-aminoacyl-tRNA entities in vivo and helps enforce protein L-homochirality. This is D-aminoacyl-tRNA deacylase from Heliobacterium modesticaldum (strain ATCC 51547 / Ice1).